Consider the following 1312-residue polypeptide: Rho GTPase-activating protein gacG (1312 aa).

Disordered regions lie at residues 52–74 (VENN…KRSQ), 111–158 (SNNN…SSSD), 314–519 (ISSS…PRNF), 762–831 (NSIS…SSTG), 1185–1230 (NNNN…SSSV), and 1282–1312 (TGTS…IVEE). 2 stretches are compositionally biased toward low complexity: residues 53-67 (ENNN…NSEN) and 111-146 (SNNN…YSPR). Residues 147 to 158 (NNNNNFTESSSD) are compositionally biased toward polar residues. 3 stretches are compositionally biased toward low complexity: residues 328-355 (TTAA…ANNS), 373-397 (HHSS…IGNS), and 414-436 (LNLT…NNGN). A compositionally biased stretch (polar residues) spans 437 to 449 (EVIQSSSSTSSPR). Low complexity predominate over residues 479–507 (SSTNSLNNSTSSLKSSNNNILQQQQQQQQ). 2 stretches are compositionally biased toward polar residues: residues 508-518 (HYDSAPTTPRN) and 763-776 (SIST…GNIA). A compositionally biased stretch (low complexity) spans 792-816 (NNNNNNNNNNNNNNNNNNNNNNNNN). Residues 1030 to 1212 (SKIDPITGFN…HHNSHHHRDN (183 aa)) form the Rho-GAP domain. Residues 1196–1210 (HHHHHHHHHNSHHHR) are compositionally biased toward basic residues. Low complexity-rich tracts occupy residues 1213–1222 (NNNNSNNNSS) and 1282–1305 (TGTS…RSPS).

The protein localises to the cytoplasm. Rho GTPase-activating protein involved in the signal transduction pathway. The sequence is that of Rho GTPase-activating protein gacG (gacG) from Dictyostelium discoideum (Social amoeba).